We begin with the raw amino-acid sequence, 220 residues long: Protein-L-isoaspartate O-methyltransferase (220 aa).

The active site involves S64.

Belongs to the methyltransferase superfamily. L-isoaspartyl/D-aspartyl protein methyltransferase family.

It localises to the cytoplasm. It carries out the reaction [protein]-L-isoaspartate + S-adenosyl-L-methionine = [protein]-L-isoaspartate alpha-methyl ester + S-adenosyl-L-homocysteine. Its function is as follows. Catalyzes the methyl esterification of L-isoaspartyl residues in peptides and proteins that result from spontaneous decomposition of normal L-aspartyl and L-asparaginyl residues. It plays a role in the repair and/or degradation of damaged proteins. This is Protein-L-isoaspartate O-methyltransferase from Thermococcus onnurineus (strain NA1).